Here is a 342-residue protein sequence, read N- to C-terminus: tRNA N6-adenosine threonylcarbamoyltransferase (342 aa).

His111 and His115 together coordinate Fe cation. Residues 134–138 (LVSGG), Asp167, Gly180, and Asn277 contribute to the substrate site. Asp305 provides a ligand contact to Fe cation.

Belongs to the KAE1 / TsaD family. Fe(2+) serves as cofactor.

It is found in the cytoplasm. It catalyses the reaction L-threonylcarbamoyladenylate + adenosine(37) in tRNA = N(6)-L-threonylcarbamoyladenosine(37) in tRNA + AMP + H(+). Functionally, required for the formation of a threonylcarbamoyl group on adenosine at position 37 (t(6)A37) in tRNAs that read codons beginning with adenine. Is involved in the transfer of the threonylcarbamoyl moiety of threonylcarbamoyl-AMP (TC-AMP) to the N6 group of A37, together with TsaE and TsaB. TsaD likely plays a direct catalytic role in this reaction. In Histophilus somni (strain 2336) (Haemophilus somnus), this protein is tRNA N6-adenosine threonylcarbamoyltransferase.